The sequence spans 169 residues: GTP-dependent dephospho-CoA kinase (169 aa).

Residues D45, D64, and E121 each coordinate GTP.

This sequence belongs to the GTP-dependent DPCK family.

The catalysed reaction is 3'-dephospho-CoA + GTP = GDP + CoA + H(+). It functions in the pathway cofactor biosynthesis; coenzyme A biosynthesis. In terms of biological role, catalyzes the GTP-dependent phosphorylation of the 3'-hydroxyl group of dephosphocoenzyme A to form coenzyme A (CoA). The sequence is that of GTP-dependent dephospho-CoA kinase from Methanobrevibacter smithii (strain ATCC 35061 / DSM 861 / OCM 144 / PS).